A 306-amino-acid chain; its full sequence is Protodermal factor 1 (306 aa).

The N-terminal stretch at 1–23 is a signal peptide; sequence MRGMVSFAVWALFAALLSQQLFA. Positions 40–56 are enriched in low complexity; sequence PPSGSHGTPPSHTPPSS. The disordered stretch occupies residues 40–156; that stretch reads PPSGSHGTPP…VVTPPSPIVD (117 aa). The span at 62–83 shows a compositional bias: pro residues; sequence PYDPSPSTPSHPSPPSHTPTPS. Positions 84-99 are enriched in low complexity; the sequence is TPSHTPTPHTPSHTPT. The segment covering 139 to 154 has biased composition (pro residues); it reads SPPPRTPVVVTPPSPI.

As to expression, confined to the shoot apical meristem (SAM) at the layer L1 in vegetative, infloresence and floral meristems, as well as in protoderm of organ primordia, including during embryogenesis. Also present in the tip of emerging lateral root primordia.

May be involved in the regulation of meristem growth. This chain is Protodermal factor 1 (PDF1), found in Arabidopsis thaliana (Mouse-ear cress).